A 578-amino-acid polypeptide reads, in one-letter code: Synaptic defective enhancer 1 (578 aa).

4 disordered regions span residues 1 to 62 (MGEP…RKET), 173 to 216 (SEQA…SMDQ), 426 to 457 (PPLPPPQAPFSGDCWRAQPAAPVPASVPVSSA), and 474 to 578 (LGLH…FSNF). Residues 444-455 (PAAPVPASVPVS) show a composition bias toward low complexity. Composition is skewed to pro residues over residues 481–491 (PPPPPPPPPPT) and 500–542 (IPPP…PNPN). Over residues 565–578 (NQFPPQQQQSFSNF) the composition is skewed to low complexity.

In terms of assembly, may interact (via C-terminus) with ssup-72; the interaction may prevent ssup-72 binding to RNA polymerase II subunit ama-1. Expressed in germline, oocytes, epidermis, pharyngeal bulb and neurons.

The protein localises to the nucleus. The protein resides in the nucleus speckle. Functionally, acts as a negative regulator of nuclear pre-mRNA 3'-end processing (mRNA polyadenylation). Plays a role in tissue-specific expression of protein isoforms by regulating differential processing of pre-mRNA 3'-end (alternative polyadenylation). In neurons, regulates alternative polyadenylation of specific mRNAs including unc-44 and dlk-1 by interacting with phosphatase ssup-72 and thus preventing ssup-72 dephosphorylation of RNA polymerase II subunit ama-1. Specifically, alters the usage of internal polyadenylation sites (PAS) to promote the production of neuron-specific unc-44 isoform and dlk-1 isoform c, both required for normal synapse and axon development. Conversely, in the epidermis, by inhibiting ssup-72 function, promotes the usage of an internal PAS preventing the production of one of unc-44 isoforms. In neurons, also negatively regulates protein levels of pre-RNA processing protein psf-2. The protein is Synaptic defective enhancer 1 of Caenorhabditis elegans.